The following is a 582-amino-acid chain: Phosphoribosylaminoimidazole carboxylase (582 aa).

In terms of domain architecture, ATP-grasp spans 114-305 (KKYLAERGVA…QFENHLRAIL (192 aa)). Residue 143-200 (AGRLGLPLMLKAKTLAYDGRGNSPLKSASSGDIQASLKFLGDRPLYAEGWAPFVKEVA) coordinates ATP.

The protein in the C-terminal section; belongs to the AIR carboxylase family. Class I subfamily.

The enzyme catalyses 5-amino-1-(5-phospho-D-ribosyl)imidazole-4-carboxylate + H(+) = 5-amino-1-(5-phospho-beta-D-ribosyl)imidazole + CO2. It functions in the pathway purine metabolism; IMP biosynthesis via de novo pathway; 5-amino-1-(5-phospho-D-ribosyl)imidazole-4-carboxylate from 5-amino-1-(5-phospho-D-ribosyl)imidazole (carboxylase route): step 1/1. The polypeptide is Phosphoribosylaminoimidazole carboxylase (ADE2) (Cryptococcus neoformans var. neoformans serotype D (strain JEC21 / ATCC MYA-565) (Filobasidiella neoformans)).